Here is a 92-residue protein sequence, read N- to C-terminus: PqqA binding protein (92 aa).

The protein belongs to the PqqD family. In terms of assembly, monomer. Interacts with PqqE.

It participates in cofactor biosynthesis; pyrroloquinoline quinone biosynthesis. Its function is as follows. Functions as a PqqA binding protein and presents PqqA to PqqE, in the pyrroloquinoline quinone (PQQ) biosynthetic pathway. The polypeptide is PqqA binding protein (Azotobacter vinelandii (strain DJ / ATCC BAA-1303)).